The primary structure comprises 123 residues: Loki profilin-3 (123 aa).

This sequence belongs to the Asgard profilin family.

The protein resides in the cytoplasm. The protein localises to the cytoskeleton. In terms of biological role, binds to actin and affects the structure of the cytoskeleton. At high concentrations inhibits spontaneous rabbit actin nucleation. This strongly suggests this archaea has a profilin-regulated actin system, and actin-type genes can be identified in this organism. The polypeptide is Loki profilin-3 (Lokiarchaeum sp. (strain GC14_75)).